A 631-amino-acid polypeptide reads, in one-letter code: ATP-dependent protease PrkA (631 aa).

A Phosphothreonine modification is found at Thr217. Ser219 carries the post-translational modification Phosphoserine.

The protein belongs to the PrkA family. Post-translationally, phosphorylated by PrkC on two sites, Thr-217 and Ser-219, with the threonine being the major site of modification.

It is found in the forespore. The protein localises to the spore coat. It carries out the reaction Hydrolysis of proteins in presence of ATP.. Its activity is regulated as follows. Hydrolase activity is regulated by phosphorylation by the Ser/Thr kinase PrkC, probably allowing fine control of sporulation. Phosphorylation by PrkC does not prevent ATP fixation but it inhibits specifically PrkA protease activity and down-regulates the sporulation processes. Hydrolase activity is inhibited by a protease inhibitor, phenylmethylsulfonyl fluoride (PMSF). Potential kinase activity requires the presence of MgCl(2) and is inhibited in the presence of MnCl(2). Its function is as follows. ATP-dependent protease that regulates sporulation. Is able to bind and hydrolyze ATP. This ATP-dependent protease activity is necessary for efficient sporulation of B.subtilis. In vitro, can hydrolyze alpha-casein, an exogenous substrate of Lon proteases, in an ATP-dependent manner. PrkA also modulates sporulation by negatively regulating the transcriptional regulator Hpr/ScoC to induce the expression of sigK. The control of sporulation mediated via the Hpr/ScoC regulator is probably indirect. PrkA was originally thought to be a protein kinase, as it has been shown to phosphorylate in vitro an unidentified 60 kDa protein from B.subtilis crude extracts at a serine residue. However, Zhang et al. did not observe autophosphorylation or kinase activity for this protein, suggesting that it may have lost its kinase activity during evolution or may be a pseudokinase. This Bacillus subtilis (strain 168) protein is ATP-dependent protease PrkA.